The primary structure comprises 1249 residues: Protein transport protein Sec31A (1249 aa).

WD repeat units follow at residues 4–47 (KEID…EIFE), 64–111 (SSSH…AGDK), 120–160 (KHTG…TPMT), 166–206 (QPPE…PIIK), 209–254 (DHSN…SPLR), 258–298 (NHAR…VLYE), and 301–342 (TNTQ…DGLR). The tract at residues 161–470 (PGAKTQPPED…IDASQTDFEK (310 aa)) is interaction with SEC13. The WD 8; interaction with SEC13 repeat unit spans residues 397 to 429 (SFSFGGKLVTFENVTGQPQQGAEQPRRQPVFIS). R423 bears the Asymmetric dimethylarginine mark. Phosphoserine is present on residues S526 and S531. Residue K647 forms a Glycyl lysine isopeptide (Lys-Gly) (interchain with G-Cter in ubiquitin) linkage. 3 disordered regions span residues 790–829 (QGRSVPGQESSRSSYEGQPLPKGGPGPLAGHPQVSRVQSQ), 842–940 (TTWS…RYPN), and 954–1123 (PHMY…PIGN). A compositionally biased stretch (polar residues) spans 796–805 (GQESSRSSYE). A Phosphoserine modification is found at S799. Positions 800–1142 (SRSSYEGQPL…TEKITKKPIP (343 aa)) are interaction with PDCD6. The ALG-2-binding site motif-2 (ABS-2) signature appears at 873–879 (GFIMHGN). Over residues 898-908 (QPPPYPQPQPY) the composition is skewed to pro residues. 2 stretches are compositionally biased toward low complexity: residues 961-970 (PASSPTSSSA) and 991-1007 (PSSSAYALPPGTTGTPP). Residues 1013–1024 (PASQRTGPQNGW) are compositionally biased toward polar residues. The span at 1056-1074 (PGGDPQPQGLQQQPSASGP) shows a compositional bias: low complexity. T1190 is subject to Phosphothreonine. At S1192 the chain carries Phosphoserine. Residue K1246 forms a Glycyl lysine isopeptide (Lys-Gly) (interchain with G-Cter in ubiquitin) linkage.

This sequence belongs to the WD repeat SEC31 family. In terms of assembly, COPII is composed of at least 5 proteins: the SEC23/24 complex, the SEC13/31 complex and SAR1. SEC13 and SEC31 make a 2:2 tetramer that forms the edge element of the COPII outer coat. The tetramer self-assembles in multiple copies to form the complete polyhedral cage. Interacts (via WD 8) with SEC13. Interacts with PDCD6; interaction takes place in response to cytosolic calcium increase and leads to bridge together the BCR(KLHL12) complex and SEC31A, leading to monoubiquitination. Interacts with KLHL12. Monoubiquitinated by the BCR(KLHL12) E3 ubiquitin ligase complex, leading to regulate the size of COPII coats. As to expression, ubiquitously expressed.

Its subcellular location is the cytoplasm. It is found in the cytoplasmic vesicle. The protein resides in the COPII-coated vesicle membrane. It localises to the endoplasmic reticulum membrane. Its function is as follows. Component of the coat protein complex II (COPII) which promotes the formation of transport vesicles from the endoplasmic reticulum (ER). The coat has two main functions, the physical deformation of the endoplasmic reticulum membrane into vesicles and the selection of cargo molecules. The sequence is that of Protein transport protein Sec31A (Sec31a) from Rattus norvegicus (Rat).